The primary structure comprises 320 residues: Apolipoprotein E (320 aa).

Residues 1–18 form the signal peptide; that stretch reads MKVLWAALLVAFLAGCQG. Tandem repeats lie at residues 82 to 103, 104 to 125, 126 to 147, 148 to 169, 170 to 191, 192 to 213, 214 to 236, and 237 to 258. The 8 X 22 AA approximate tandem repeats stretch occupies residues 82-258; that stretch reads ALMDETMKEL…RLDEVKEQVE (177 aa). M145 carries the methionine sulfoxide modification. Phosphoserine is present on S149. The interval 160-170 is LDL and other lipoprotein receptors binding; it reads HLRKLRKRLLR. Position 164–167 (164–167) interacts with heparin; that stretch reads LRKR. The tract at residues 212 to 293 is lipid-binding and lipoprotein association; it reads AATVGSSLAG…SWFEPLVEDM (82 aa). 232–239 lines the heparin pocket; it reads GERLRARM. Residues 269–320 form a homooligomerization region; that stretch reads QQMRLQAEAFQARLKSWFEPLVEDMQRQWAGLVEKVQAAVGASAAPVPSDNH. The interval 281-293 is specificity for association with VLDL; it reads RLKSWFEPLVEDM.

The protein belongs to the apolipoprotein A1/A4/E family. As to quaternary structure, homotetramer. May interact with ABCA1; functionally associated with ABCA1 in the biogenesis of HDLs. May interact with APP/A4 amyloid-beta peptide; the interaction is extremely stable in vitro but its physiological significance is unclear. May interact with MAPT. May interact with MAP2. In the cerebrospinal fluid, interacts with secreted SORL1. Interacts with PMEL; this allows the loading of PMEL luminal fragment on ILVs to induce fibril nucleation. Post-translationally, APOE exists as multiple glycosylated and sialylated glycoforms within cells and in plasma. The extent of glycosylation and sialylation are tissue and context specific. Glycated in plasma VLDL. In terms of processing, phosphorylated by FAM20C in the extracellular medium.

It is found in the secreted. It localises to the extracellular space. The protein resides in the extracellular matrix. The protein localises to the extracellular vesicle. Its subcellular location is the endosome. It is found in the multivesicular body. Functionally, APOE is an apolipoprotein, a protein associating with lipid particles, that mainly functions in lipoprotein-mediated lipid transport between organs via the plasma and interstitial fluids. APOE is a core component of plasma lipoproteins and is involved in their production, conversion and clearance. Apolipoproteins are amphipathic molecules that interact both with lipids of the lipoprotein particle core and the aqueous environment of the plasma. As such, APOE associates with chylomicrons, chylomicron remnants, very low density lipoproteins (VLDL) and intermediate density lipoproteins (IDL) but shows a preferential binding to high-density lipoproteins (HDL). It also binds a wide range of cellular receptors including the LDL receptor/LDLR, the LDL receptor-related proteins LRP1, LRP2 and LRP8 and the very low-density lipoprotein receptor/VLDLR that mediate the cellular uptake of the APOE-containing lipoprotein particles. Finally, APOE also has a heparin-binding activity and binds heparan-sulfate proteoglycans on the surface of cells, a property that supports the capture and the receptor-mediated uptake of APOE-containing lipoproteins by cells. A main function of APOE is to mediate lipoprotein clearance through the uptake of chylomicrons, VLDLs, and HDLs by hepatocytes. APOE is also involved in the biosynthesis by the liver of VLDLs as well as their uptake by peripheral tissues ensuring the delivery of triglycerides and energy storage in muscle, heart and adipose tissues. By participating in the lipoprotein-mediated distribution of lipids among tissues, APOE plays a critical role in plasma and tissues lipid homeostasis. APOE is also involved in two steps of reverse cholesterol transport, the HDLs-mediated transport of cholesterol from peripheral tissues to the liver, and thereby plays an important role in cholesterol homeostasis. First, it is functionally associated with ABCA1 in the biogenesis of HDLs in tissues. Second, it is enriched in circulating HDLs and mediates their uptake by hepatocytes. APOE also plays an important role in lipid transport in the central nervous system, regulating neuron survival and sprouting. This chain is Apolipoprotein E (APOE), found in Plecturocebus moloch (Dusky titi monkey).